A 247-amino-acid polypeptide reads, in one-letter code: UPF0246 protein LAF_1150 (247 aa).

This sequence belongs to the UPF0246 family.

The polypeptide is UPF0246 protein LAF_1150 (Limosilactobacillus fermentum (strain NBRC 3956 / LMG 18251) (Lactobacillus fermentum)).